The following is a 90-amino-acid chain: Protein E7 (90 aa).

The E7 terminal domain stretch occupies residues 1–41 (MHGPKPTVKDIELDLAPEAVPLVCNEQLDSSDEEDCIDVVE). Residues 22–26 (LVCNE) carry the LXCXE motif; interaction with host RB1 and TMEM173/STING motif. A zinc finger spans residues 53–89 (CTKCSTTLRLVVESSEADIRAFQELLLRTLKIVCPRC). Residues 71–79 (IRAFQELLL) carry the Nuclear export signal motif.

This sequence belongs to the papillomaviridae E7 protein family. Homodimer. Homooligomer. Interacts with host RB1; this interaction induces dissociation of RB1-E2F1 complex thereby disrupting RB1 activity. Interacts with host EP300; this interaction represses EP300 transcriptional activity. Interacts with protein E2; this interaction inhibits E7 oncogenic activity. Interacts with host TMEM173/STING; this interaction impairs the ability of TMEM173/STING to sense cytosolic DNA and promote the production of type I interferon (IFN-alpha and IFN-beta). In terms of processing, highly phosphorylated.

Its subcellular location is the host cytoplasm. It localises to the host nucleus. Its function is as follows. Plays a role in viral genome replication by driving entry of quiescent cells into the cell cycle. Stimulation of progression from G1 to S phase allows the virus to efficiently use the cellular DNA replicating machinery to achieve viral genome replication. E7 protein has both transforming and trans-activating activities. Induces the disassembly of the E2F1 transcription factor from RB1, with subsequent transcriptional activation of E2F1-regulated S-phase genes. Interferes with host histone deacetylation mediated by HDAC1 and HDAC2, leading to transcription activation. Also plays a role in the inhibition of both antiviral and antiproliferative functions of host interferon alpha. Interaction with host TMEM173/STING impairs the ability of TMEM173/STING to sense cytosolic DNA and promote the production of type I interferon (IFN-alpha and IFN-beta). The sequence is that of Protein E7 from Homo sapiens (Human).